We begin with the raw amino-acid sequence, 264 residues long: MSKVTSSTLLKYKQEGRKFTALTAYDASFASAFDGEGIDVLLVGDSLGMVLQGHDDTLPVTTAEIAYHTRCVRRGIERSLLIADMPFMSYATPEQAMENATALMQAGANMVKLEGGHWLLETVTKLTERGIPVCAHLGLTPQSVHVFGGFKVQGRDAENAQRILDEAKALEAAGAQLLVVECIPESLATAITQALTIPVIGIGAGATTDGQILVMHDVLGISSGYIPRFSKNYLKQTGEIRSAVRAYIEEVANGTFPSSEHTFS.

Mg(2+)-binding residues include Asp45 and Asp84. 3-methyl-2-oxobutanoate is bound by residues Asp45–Ser46, Asp84, and Lys112. Glu114 serves as a coordination point for Mg(2+). Glu181 acts as the Proton acceptor in catalysis.

It belongs to the PanB family. Homodecamer; pentamer of dimers. Mg(2+) serves as cofactor.

Its subcellular location is the cytoplasm. It carries out the reaction 3-methyl-2-oxobutanoate + (6R)-5,10-methylene-5,6,7,8-tetrahydrofolate + H2O = 2-dehydropantoate + (6S)-5,6,7,8-tetrahydrofolate. It functions in the pathway cofactor biosynthesis; (R)-pantothenate biosynthesis; (R)-pantoate from 3-methyl-2-oxobutanoate: step 1/2. Catalyzes the reversible reaction in which hydroxymethyl group from 5,10-methylenetetrahydrofolate is transferred onto alpha-ketoisovalerate to form ketopantoate. This Shewanella sp. (strain MR-7) protein is 3-methyl-2-oxobutanoate hydroxymethyltransferase.